The following is a 278-amino-acid chain: N-terminal Xaa-Pro-Lys N-methyltransferase 2 (278 aa).

Residues glycine 123, arginine 128, aspartate 145, 174 to 175 (LQ), glutamine 190, and histidine 195 contribute to the S-adenosyl-L-methionine site.

The protein belongs to the methyltransferase superfamily. NTM1 family.

It is found in the nucleus. The catalysed reaction is N-terminal L-alanyl-L-prolyl-L-lysyl-[protein] + S-adenosyl-L-methionine = N-terminal N-methyl-L-alanyl-L-prolyl-L-lysyl-[protein] + S-adenosyl-L-homocysteine + H(+). It catalyses the reaction N-terminal L-prolyl-L-prolyl-L-lysyl-[protein] + S-adenosyl-L-methionine = N-terminal N-methyl-L-prolyl-L-prolyl-L-lysyl-[protein] + S-adenosyl-L-homocysteine + H(+). The enzyme catalyses N-terminal L-seryl-L-prolyl-L-lysyl-[protein] + S-adenosyl-L-methionine = N-terminal N-methyl-L-seryl-L-prolyl-L-lysyl-[protein] + S-adenosyl-L-homocysteine + H(+). Alpha N-methyltransferase that methylates the N-terminus of target proteins containing the N-terminal motif [Ala/Pro/Ser]-Pro-Lys when the initiator Met is cleaved. Specifically catalyzes monomethylation of exposed alpha-amino group of Ala or Ser residue in the [Ala/Ser]-Pro-Lys motif and Pro in the Pro-Pro-Lys motif. Predominantly functions as a mono-methyltransferase but is also able to di-/tri-methylate the GPKRIA peptide and di-methylate the PPKRIA peptide (in vitro). May activate NTMT1 by priming its substrates for trimethylation. The protein is N-terminal Xaa-Pro-Lys N-methyltransferase 2 (ntmt2) of Danio rerio (Zebrafish).